The following is a 228-amino-acid chain: MDTMRQRILVVDDDPSLAEMLTIVLRGEGFDTAVIGDGSQALTAVRELRPDLVLLDLMLPGMNGIDVCRVLRADSGVPIVMLTAKTDTVDVVLGLESGADDYVMKPFKPKELVARVRARLRRNEDEPAEMLSIGDVEIDVPAHKVTRQGEQISLTPLEFDLLVALARKPRQVFTRDVLLEQVWGYRHPADTRLVNVHVQRLRAKVEKDPENPQVVLTVRGVGYKAGPP.

The Response regulatory domain maps to 7 to 120 (RILVVDDDPS…ELVARVRARL (114 aa)). The residue at position 56 (Asp-56) is a 4-aspartylphosphate. Residues 128-227 (AEMLSIGDVE…VRGVGYKAGP (100 aa)) constitute a DNA-binding region (ompR/PhoB-type).

As to quaternary structure, probably a monomer when inactive, phosphorylation may permit it to oligomerize. The monomeric form does not seem to be phosphorylated. In terms of processing, phosphorylated by MtrB.

Its subcellular location is the cytoplasm. Its function is as follows. Member of the two-component regulatory system MtrA/MtrB, responding to environmental signals. Controls expression of a number of genes including dnaA, ripA, fbpB and probably itself. Probably plays a role in cell division. The chain is DNA-binding response regulator MtrA (mtrA) from Mycolicibacterium smegmatis (strain ATCC 700084 / mc(2)155) (Mycobacterium smegmatis).